A 158-amino-acid polypeptide reads, in one-letter code: Ribosome maturation factor RimP (158 aa).

It belongs to the RimP family.

It localises to the cytoplasm. Required for maturation of 30S ribosomal subunits. This is Ribosome maturation factor RimP from Pseudomonas putida (strain ATCC 47054 / DSM 6125 / CFBP 8728 / NCIMB 11950 / KT2440).